Consider the following 195-residue polypeptide: MTDRTAAVTRTTAETDIEVTLDVDGDGDSTIDTGIGFFDHMLDSFSTHGLFDLTVQCDGDLDIDDHHTVEDVAITLGEAFTEALDDKRGIRRFADRKVPLDEAVASVVVDISGRPYFEFDGEFSQASVGGMTSHMAKHFCRSLSMNAGLTLHCGVDGENAHHEIEALFKSLARSLDDATRIDERRSDVASTKGEL.

It belongs to the imidazoleglycerol-phosphate dehydratase family.

It is found in the cytoplasm. The enzyme catalyses D-erythro-1-(imidazol-4-yl)glycerol 3-phosphate = 3-(imidazol-4-yl)-2-oxopropyl phosphate + H2O. It functions in the pathway amino-acid biosynthesis; L-histidine biosynthesis; L-histidine from 5-phospho-alpha-D-ribose 1-diphosphate: step 6/9. This is Imidazoleglycerol-phosphate dehydratase from Haloarcula marismortui (strain ATCC 43049 / DSM 3752 / JCM 8966 / VKM B-1809) (Halobacterium marismortui).